A 129-amino-acid chain; its full sequence is Glycine cleavage system H protein (129 aa).

In terms of domain architecture, Lipoyl-binding spans 24–106 (EAVVGITEHA…YGAGWLFRIK (83 aa)). K65 is subject to N6-lipoyllysine.

Belongs to the GcvH family. The glycine cleavage system is composed of four proteins: P, T, L and H. The cofactor is (R)-lipoate.

The glycine cleavage system catalyzes the degradation of glycine. The H protein shuttles the methylamine group of glycine from the P protein to the T protein. The sequence is that of Glycine cleavage system H protein from Aeromonas salmonicida (strain A449).